The following is a 426-amino-acid chain: Dihydroorotase (426 aa).

Zn(2+) is bound by residues histidine 58 and histidine 60. Substrate contacts are provided by residues histidine 60 to arginine 62 and asparagine 92. 3 residues coordinate Zn(2+): aspartate 150, histidine 177, and histidine 230. Residue asparagine 276 coordinates substrate. Aspartate 303 is a Zn(2+) binding site. Aspartate 303 is an active-site residue. Histidine 307 lines the substrate pocket.

It belongs to the metallo-dependent hydrolases superfamily. DHOase family. Class I DHOase subfamily. The cofactor is Zn(2+).

The catalysed reaction is (S)-dihydroorotate + H2O = N-carbamoyl-L-aspartate + H(+). The protein operates within pyrimidine metabolism; UMP biosynthesis via de novo pathway; (S)-dihydroorotate from bicarbonate: step 3/3. Functionally, catalyzes the reversible cyclization of carbamoyl aspartate to dihydroorotate. The polypeptide is Dihydroorotase (Acetivibrio thermocellus (strain ATCC 27405 / DSM 1237 / JCM 9322 / NBRC 103400 / NCIMB 10682 / NRRL B-4536 / VPI 7372) (Clostridium thermocellum)).